Here is a 267-residue protein sequence, read N- to C-terminus: Probable ribose-5-phosphate isomerase 1 (267 aa).

The residue at position 2 (G2) is an N-acetylglycine. S92 carries the post-translational modification Phosphoserine.

The protein belongs to the ribose 5-phosphate isomerase family. Expressed in roots, cotyledons, leaves and flowers.

The protein localises to the cytoplasm. It catalyses the reaction aldehydo-D-ribose 5-phosphate = D-ribulose 5-phosphate. The protein operates within carbohydrate degradation; pentose phosphate pathway; D-ribose 5-phosphate from D-ribulose 5-phosphate (non-oxidative stage): step 1/1. Functionally, catalyzes the reversible conversion of ribose-5-phosphate to ribulose 5-phosphate. The chain is Probable ribose-5-phosphate isomerase 1 (RPI1) from Arabidopsis thaliana (Mouse-ear cress).